The sequence spans 140 residues: HTH-type transcriptional regulator AdhR (140 aa).

An HTH merR-type domain is found at 1–69 (MNIAQVAKQF…IEALIEYTTL (69 aa)). The H-T-H motif DNA-binding region spans 3–22 (IAQVAKQFGLTAATLRYYER). Positions 75–125 (RTVEARKNILADERQRLIEKRKEIDETIKRLDTKIKDYDGKLRENEAKLKS) form a coiled coil. A disordered region spans residues 120–140 (EAKLKSRPKTESLHGSVEQRR).

Transcriptional regulator involved in the response to aldehyde stress. Binds to the promoter region of the adhA-yraA operon, the yraC and its own promoter region; binding is unchanged in the presence of aldehydes. This chain is HTH-type transcriptional regulator AdhR (adhR), found in Bacillus subtilis (strain 168).